The sequence spans 124 residues: Large ribosomal subunit protein bL21 (124 aa).

A disordered region spans residues 105–124; that stretch reads NAPSIGPRVRKAKPAAEAAE.

It belongs to the bacterial ribosomal protein bL21 family. As to quaternary structure, part of the 50S ribosomal subunit. Contacts protein L20.

This protein binds to 23S rRNA in the presence of protein L20. This is Large ribosomal subunit protein bL21 from Rhodopseudomonas palustris (strain BisA53).